Here is a 299-residue protein sequence, read N- to C-terminus: Acetylglutamate kinase (299 aa).

Substrate is bound by residues 72 to 73, Arg-94, and Asn-196; that span reads GG.

Belongs to the acetylglutamate kinase family. ArgB subfamily.

It is found in the cytoplasm. It carries out the reaction N-acetyl-L-glutamate + ATP = N-acetyl-L-glutamyl 5-phosphate + ADP. Its pathway is amino-acid biosynthesis; L-arginine biosynthesis; N(2)-acetyl-L-ornithine from L-glutamate: step 2/4. Catalyzes the ATP-dependent phosphorylation of N-acetyl-L-glutamate. The chain is Acetylglutamate kinase from Burkholderia ambifaria (strain MC40-6).